A 379-amino-acid polypeptide reads, in one-letter code: Succinate--CoA ligase [ADP-forming] subunit beta (379 aa).

An ATP-grasp domain is found at 9–237 (RDILARYGIP…SSDEPEAEQR (229 aa)). Residues Lys-45, 52–54 (GRG), Ile-94, and Glu-99 each bind ATP. Residues Asn-192 and Asp-206 each coordinate Mg(2+). Substrate-binding positions include Asn-257 and 314 to 316 (GIT).

The protein belongs to the succinate/malate CoA ligase beta subunit family. Heterotetramer of two alpha and two beta subunits. It depends on Mg(2+) as a cofactor.

It carries out the reaction succinate + ATP + CoA = succinyl-CoA + ADP + phosphate. The enzyme catalyses GTP + succinate + CoA = succinyl-CoA + GDP + phosphate. It participates in carbohydrate metabolism; tricarboxylic acid cycle; succinate from succinyl-CoA (ligase route): step 1/1. Functionally, succinyl-CoA synthetase functions in the citric acid cycle (TCA), coupling the hydrolysis of succinyl-CoA to the synthesis of either ATP or GTP and thus represents the only step of substrate-level phosphorylation in the TCA. The beta subunit provides nucleotide specificity of the enzyme and binds the substrate succinate, while the binding sites for coenzyme A and phosphate are found in the alpha subunit. This is Succinate--CoA ligase [ADP-forming] subunit beta from Roseiflexus sp. (strain RS-1).